A 573-amino-acid polypeptide reads, in one-letter code: Adenine deaminase (573 aa).

This sequence belongs to the metallo-dependent hydrolases superfamily. Adenine deaminase family. Requires Mn(2+) as cofactor.

It catalyses the reaction adenine + H2O + H(+) = hypoxanthine + NH4(+). The polypeptide is Adenine deaminase (Bacillus licheniformis (strain ATCC 14580 / DSM 13 / JCM 2505 / CCUG 7422 / NBRC 12200 / NCIMB 9375 / NCTC 10341 / NRRL NRS-1264 / Gibson 46)).